Here is a 204-residue protein sequence, read N- to C-terminus: UPF0228 protein MA_0511 (204 aa).

Belongs to the UPF0228 family.

The chain is UPF0228 protein MA_0511 from Methanosarcina acetivorans (strain ATCC 35395 / DSM 2834 / JCM 12185 / C2A).